We begin with the raw amino-acid sequence, 441 residues long: tRNA-2-methylthio-N(6)-dimethylallyladenosine synthase (441 aa).

An MTTase N-terminal domain is found at K5 to E121. Positions 14, 50, 84, 159, 163, and 166 each coordinate [4Fe-4S] cluster. One can recognise a Radical SAM core domain in the interval A145–A375. Positions R378–H440 constitute a TRAM domain.

This sequence belongs to the methylthiotransferase family. MiaB subfamily. As to quaternary structure, monomer. It depends on [4Fe-4S] cluster as a cofactor.

It localises to the cytoplasm. It catalyses the reaction N(6)-dimethylallyladenosine(37) in tRNA + (sulfur carrier)-SH + AH2 + 2 S-adenosyl-L-methionine = 2-methylsulfanyl-N(6)-dimethylallyladenosine(37) in tRNA + (sulfur carrier)-H + 5'-deoxyadenosine + L-methionine + A + S-adenosyl-L-homocysteine + 2 H(+). In terms of biological role, catalyzes the methylthiolation of N6-(dimethylallyl)adenosine (i(6)A), leading to the formation of 2-methylthio-N6-(dimethylallyl)adenosine (ms(2)i(6)A) at position 37 in tRNAs that read codons beginning with uridine. The protein is tRNA-2-methylthio-N(6)-dimethylallyladenosine synthase of Citrifermentans bemidjiense (strain ATCC BAA-1014 / DSM 16622 / JCM 12645 / Bem) (Geobacter bemidjiensis).